A 370-amino-acid chain; its full sequence is Alpha-ketoglutarate-dependent dioxygenase cnsP (370 aa).

Residues 1–12 (MSTTTVITPGTI) show a composition bias toward low complexity. Residues 1-20 (MSTTTVITPGTITREKNENG) are disordered. Histidine 131 provides a ligand contact to substrate. Fe cation contacts are provided by histidine 169 and aspartate 171. A 2-oxoglutarate-binding site is contributed by threonine 197. Residue histidine 321 participates in Fe cation binding. Residues arginine 333 and arginine 337 each coordinate 2-oxoglutarate. Arginine 337 is a substrate binding site.

It belongs to the TfdA dioxygenase family. The cofactor is Fe(2+).

It functions in the pathway alkaloid biosynthesis. Its function is as follows. Alpha-ketoglutarate-dependent dioxygenase; part of the gene cluster that mediates the biosynthesis of communesins, a prominent class of indole alkaloids with great potential as pharmaceuticals. Communesins are biosynthesized by the coupling of tryptamine and aurantioclavine, two building blocks derived from L-tryptophan. The L-tryptophan decarboxylase cnsB converts L-tryptophan to tryptamine, whereas the tryptophan dimethylallyltransferase cnsF converts L-tryptophan to 4-dimethylallyl tryptophan which is further transformed to aurantioclavine by the aurantioclavine synthase cnsA, probably aided by the catalase cnsD. The cytochrome P450 monooxygenase cnsC catalyzes the heterodimeric coupling between the two different indole moieties, tryptamine and aurantioclavine, to construct vicinal quaternary stereocenters and yield the heptacyclic communesin scaffold. The O-methyltransferase cnsE then methylates the communesin scaffold to produce communesin K, the simplest characterized communesin that contains the heptacyclic core. The dioxygenase cnsJ converts communesin K into communesin I. Acylation to introduce the hexadienyl group at position N16 of communesin I by the acyltransferase cnsK leads to the production of communesin B. The hexadienyl group is produced by the highly reducing polyketide synthase cnsI, before being hydrolytically removed from cnsI by the serine hydrolase cnsH, converted into hexadienyl-CoA by the CoA ligase cnsG, and then transferred to communesin I by cnsK. Surprisingly, cnsK may also be a promiscuous acyltransferase that can tolerate a range of acyl groups, including acetyl-, propionyl-, and butyryl-CoA, which lead to communesins A, G and H respectively. The roles of the alpha-ketoglutarate-dependent dioxygenases cnsM and cnsP have still to be determined. The polypeptide is Alpha-ketoglutarate-dependent dioxygenase cnsP (Penicillium expansum (Blue mold rot fungus)).